The sequence spans 427 residues: Tol-Pal system protein TolB (427 aa).

The N-terminal stretch at 1–27 (MPVSLLRALLVFSLLCLGLSATRAAHA) is a signal peptide.

This sequence belongs to the TolB family. In terms of assembly, the Tol-Pal system is composed of five core proteins: the inner membrane proteins TolA, TolQ and TolR, the periplasmic protein TolB and the outer membrane protein Pal. They form a network linking the inner and outer membranes and the peptidoglycan layer.

It is found in the periplasm. Its function is as follows. Part of the Tol-Pal system, which plays a role in outer membrane invagination during cell division and is important for maintaining outer membrane integrity. This Thiobacillus denitrificans (strain ATCC 25259 / T1) protein is Tol-Pal system protein TolB.